The sequence spans 75 residues: ATP synthase subunit c (75 aa).

The next 2 membrane-spanning stretches (helical) occupy residues 8–28 (FIAIGLSVLGILGAGLGVANI) and 54–74 (AGMVEFTGLLAFVLAMLLMFV).

The protein belongs to the ATPase C chain family. In terms of assembly, F-type ATPases have 2 components, F(1) - the catalytic core - and F(0) - the membrane proton channel. F(1) has five subunits: alpha(3), beta(3), gamma(1), delta(1), epsilon(1). F(0) has three main subunits: a(1), b(2) and c(10-14). The alpha and beta chains form an alternating ring which encloses part of the gamma chain. F(1) is attached to F(0) by a central stalk formed by the gamma and epsilon chains, while a peripheral stalk is formed by the delta and b chains.

Its subcellular location is the cell membrane. Functionally, f(1)F(0) ATP synthase produces ATP from ADP in the presence of a proton or sodium gradient. F-type ATPases consist of two structural domains, F(1) containing the extramembraneous catalytic core and F(0) containing the membrane proton channel, linked together by a central stalk and a peripheral stalk. During catalysis, ATP synthesis in the catalytic domain of F(1) is coupled via a rotary mechanism of the central stalk subunits to proton translocation. In terms of biological role, key component of the F(0) channel; it plays a direct role in translocation across the membrane. A homomeric c-ring of between 10-14 subunits forms the central stalk rotor element with the F(1) delta and epsilon subunits. In Wolbachia sp. subsp. Brugia malayi (strain TRS), this protein is ATP synthase subunit c.